Reading from the N-terminus, the 229-residue chain is NAD-dependent protein deacylase (229 aa).

A Deacetylase sirtuin-type domain is found at 1-227 (MKNLVILSGA…QDLMPKLIEM (227 aa)). 9–28 (GAGISAESGIKTFRDADGLW) serves as a coordination point for NAD(+). The substrate site is built by Tyr53 and Arg56. An NAD(+)-binding site is contributed by 86 to 89 (QNVD). Catalysis depends on His104, which acts as the Proton acceptor. 169 to 171 (GTS) is an NAD(+) binding site.

The protein belongs to the sirtuin family. Class III subfamily.

The protein resides in the cytoplasm. It carries out the reaction N(6)-acetyl-L-lysyl-[protein] + NAD(+) + H2O = 2''-O-acetyl-ADP-D-ribose + nicotinamide + L-lysyl-[protein]. The enzyme catalyses N(6)-succinyl-L-lysyl-[protein] + NAD(+) + H2O = 2''-O-succinyl-ADP-D-ribose + nicotinamide + L-lysyl-[protein]. NAD-dependent lysine deacetylase and desuccinylase that specifically removes acetyl and succinyl groups on target proteins. Modulates the activities of several proteins which are inactive in their acylated form. The sequence is that of NAD-dependent protein deacylase from Helicobacter pylori (strain ATCC 700392 / 26695) (Campylobacter pylori).